A 282-amino-acid polypeptide reads, in one-letter code: Inositol oxygenase (282 aa).

The disordered stretch occupies residues 1-25; the sequence is MKDPDPSQVYRPDMDPEAAKDKGSF. The segment covering 12–24 has biased composition (basic and acidic residues); the sequence is PDMDPEAAKDKGS. Substrate is bound at residue Arg26. Ser30 is modified (phosphoserine). Residue 82–84 participates in substrate binding; it reads DES. Residues His95, His120, and Asp121 each contribute to the Fe cation site. Substrate contacts are provided by residues Lys124 and 138-139; that span reads GD. Residues His191, His217, and Asp250 each contribute to the Fe cation site. 217–218 contributes to the substrate binding site; that stretch reads HS.

Belongs to the myo-inositol oxygenase family. Requires Fe cation as cofactor. Post-translationally, the N-terminus is blocked. As to expression, kidney specific.

The protein localises to the cytoplasm. It carries out the reaction myo-inositol + O2 = D-glucuronate + H2O + H(+). It functions in the pathway polyol metabolism; myo-inositol degradation into D-glucuronate; D-glucuronate from myo-inositol: step 1/1. The polypeptide is Inositol oxygenase (MIOX) (Sus scrofa (Pig)).